A 155-amino-acid polypeptide reads, in one-letter code: Troponin C, body wall muscle (155 aa).

The residue at position 1 (valine 1) is an N-acetylvaline. EF-hand domains lie at 7–43 (DEKS…LGQN), 44–79 (PTEK…QMQA), 88–121 (REEK…TGEN), and 122–155 (VETW…KFVQ). Ca(2+)-binding residues include aspartate 57, aspartate 59, serine 61, threonine 63, and glutamate 68. Ca(2+)-binding residues include aspartate 135, asparagine 137, aspartate 139, glutamine 141, and glutamate 146.

It belongs to the troponin C family.

Troponin is the central regulatory protein of muscle contraction. Tn consists of three components: Tn-I which is the inhibitor of actomyosin ATPase, Tn-T which contains the binding site for tropomyosin and Tn-C. The binding of calcium to Tn-C abolishes the inhibitory action of Tn on actin filaments. This chain is Troponin C, body wall muscle, found in Halocynthia roretzi (Sea squirt).